Consider the following 383-residue polypeptide: UDP-N-acetylglucosamine--N-acetylmuramyl-(pentapeptide) pyrophosphoryl-undecaprenol N-acetylglucosamine transferase (383 aa).

UDP-N-acetyl-alpha-D-glucosamine contacts are provided by residues 10–12, N124, R165, S190, I245, and Q290; that span reads TGG. The disordered stretch occupies residues 364 to 383; it reads PFGQAREPGQKPARPPDLAS.

It belongs to the glycosyltransferase 28 family. MurG subfamily.

The protein localises to the cell inner membrane. It catalyses the reaction di-trans,octa-cis-undecaprenyl diphospho-N-acetyl-alpha-D-muramoyl-L-alanyl-D-glutamyl-meso-2,6-diaminopimeloyl-D-alanyl-D-alanine + UDP-N-acetyl-alpha-D-glucosamine = di-trans,octa-cis-undecaprenyl diphospho-[N-acetyl-alpha-D-glucosaminyl-(1-&gt;4)]-N-acetyl-alpha-D-muramoyl-L-alanyl-D-glutamyl-meso-2,6-diaminopimeloyl-D-alanyl-D-alanine + UDP + H(+). It functions in the pathway cell wall biogenesis; peptidoglycan biosynthesis. Functionally, cell wall formation. Catalyzes the transfer of a GlcNAc subunit on undecaprenyl-pyrophosphoryl-MurNAc-pentapeptide (lipid intermediate I) to form undecaprenyl-pyrophosphoryl-MurNAc-(pentapeptide)GlcNAc (lipid intermediate II). The polypeptide is UDP-N-acetylglucosamine--N-acetylmuramyl-(pentapeptide) pyrophosphoryl-undecaprenol N-acetylglucosamine transferase (Anaeromyxobacter dehalogenans (strain 2CP-C)).